The chain runs to 65 residues: NADH dehydrogenase [ubiquinone] 1 alpha subcomplex subunit 1 (65 aa).

A helical membrane pass occupies residues 3-23 (LVWLEAMLPLGIIGGMLCIMG).

Belongs to the complex I NDUFA1 subunit family. In terms of assembly, complex I is composed of at least 49 different subunits.

The protein localises to the mitochondrion inner membrane. Accessory subunit of the mitochondrial membrane respiratory chain NADH dehydrogenase (Complex I), that is believed not to be involved in catalysis. Complex I functions in the transfer of electrons from NADH to the respiratory chain. The immediate electron acceptor for the enzyme is believed to be ubiquinone. This chain is NADH dehydrogenase [ubiquinone] 1 alpha subcomplex subunit 1, found in Arabidopsis thaliana (Mouse-ear cress).